The sequence spans 636 residues: Chaperone protein DnaK (636 aa).

T198 bears the Phosphothreonine; by autocatalysis mark. A disordered region spans residues I600–K636. Residues A601–S618 show a composition bias toward low complexity. Residues Q619 to K636 show a composition bias toward acidic residues.

The protein belongs to the heat shock protein 70 family.

Its function is as follows. Acts as a chaperone. In Vibrio vulnificus (strain CMCP6), this protein is Chaperone protein DnaK.